The primary structure comprises 326 residues: Malate dehydrogenase (326 aa).

12-18 contributes to the NAD(+) binding site; that stretch reads GGTGQIA. Arg93 and Arg99 together coordinate substrate. Residues Asn106, Gln113, and 130–132 each bind NAD(+); that span reads VGN. Residues Asn132 and Arg163 each contribute to the substrate site. His188 functions as the Proton acceptor in the catalytic mechanism.

This sequence belongs to the LDH/MDH superfamily. MDH type 2 family.

It catalyses the reaction (S)-malate + NAD(+) = oxaloacetate + NADH + H(+). Its function is as follows. Catalyzes the reversible oxidation of malate to oxaloacetate. This chain is Malate dehydrogenase, found in Chlamydia trachomatis serovar D (strain ATCC VR-885 / DSM 19411 / UW-3/Cx).